A 90-amino-acid polypeptide reads, in one-letter code: DNA-binding protein HU-alpha (90 aa).

It belongs to the bacterial histone-like protein family. As to quaternary structure, heterodimer of an alpha and a beta chain.

In terms of biological role, histone-like DNA-binding protein which is capable of wrapping DNA to stabilize it, and thus to prevent its denaturation under extreme environmental conditions. In Vibrio cholerae serotype O1 (strain ATCC 39315 / El Tor Inaba N16961), this protein is DNA-binding protein HU-alpha (hupA).